Consider the following 325-residue polypeptide: Probable arylamine N-acetyltransferase 1 (325 aa).

Cys72 (acyl-thioester intermediate) is an active-site residue. Catalysis depends on residues His112 and Asp127.

It belongs to the arylamine N-acetyltransferase family.

It carries out the reaction an arylamine + acetyl-CoA = an N-acetylarylamine + CoA. This chain is Probable arylamine N-acetyltransferase 1, found in Dictyostelium discoideum (Social amoeba).